We begin with the raw amino-acid sequence, 250 residues long: uncharacterized protein (250 aa).

Lysine 17 participates in a covalent cross-link: Glycyl lysine isopeptide (Lys-Gly) (interchain with G-Cter in ubiquitin). Residues 30–67 (REEDYVATSKDNIHHHPCDWSAKPSQRQNENEQKSTIR) are disordered.

This is an uncharacterized protein from Saccharomyces cerevisiae (strain ATCC 204508 / S288c) (Baker's yeast).